A 460-amino-acid chain; its full sequence is Jacalin-related lectin 36 (460 aa).

The Jacalin-type lectin 1 domain occupies 1–131; that stretch reads MAAATMSWDD…LNSIDVHFAP (131 aa). Ala-2 carries the post-translational modification N-acetylalanine. Disordered stretches follow at residues 34–57, 133–162, and 291–334; these read YDGD…VSLS, PSSS…WDDG, and SGRG…PHEG. Residues 133-143 are compositionally biased toward low complexity; that stretch reads PSSSSSSSSLS. The 145-residue stretch at 145-289 folds into the Jacalin-type lectin 2 domain; it reads ANKVDAQGGK…LNALGAYFAP (145 aa). Residues 292 to 309 are compositionally biased toward polar residues; it reads GRGTPSATQPPGSAQPTG. The region spanning 313–457 is the Jacalin-type lectin 3 domain; that stretch reads AKKLEAKGGN…IHQVGVHVKP (145 aa).

The protein belongs to the jacalin lectin family.

This is Jacalin-related lectin 36 (JAL36) from Arabidopsis thaliana (Mouse-ear cress).